Here is a 397-residue protein sequence, read N- to C-terminus: Proteasome-activating nucleotidase (397 aa).

Residues 12-58 are a coiled coil; it reads GYEDYITFLKRRIRQLELQVRTLEADKERLERELSRLRTEMSRLRQP. Residues 182-187 and H321 each bind ATP; that span reads GCGKTL. The tract at residues 395 to 397 is docks into pockets in the proteasome alpha-ring to cause gate opening; that stretch reads MYG.

The protein belongs to the AAA ATPase family. In terms of assembly, homohexamer. The hexameric complex has a two-ring architecture resembling a top hat that caps the 20S proteasome core at one or both ends. Upon ATP-binding, the C-terminus of PAN interacts with the alpha-rings of the proteasome core by binding to the intersubunit pockets.

It localises to the cytoplasm. ATPase which is responsible for recognizing, binding, unfolding and translocation of substrate proteins into the archaeal 20S proteasome core particle. Is essential for opening the gate of the 20S proteasome via an interaction with its C-terminus, thereby allowing substrate entry and access to the site of proteolysis. Thus, the C-termini of the proteasomal ATPase function like a 'key in a lock' to induce gate opening and therefore regulate proteolysis. Unfolding activity requires energy from ATP hydrolysis, whereas ATP binding alone promotes ATPase-20S proteasome association which triggers gate opening, and supports translocation of unfolded substrates. The sequence is that of Proteasome-activating nucleotidase from Thermococcus gammatolerans (strain DSM 15229 / JCM 11827 / EJ3).